The primary structure comprises 356 residues: Histidinol-phosphate aminotransferase 2 (356 aa).

The residue at position 217 (Lys-217) is an N6-(pyridoxal phosphate)lysine.

The protein belongs to the class-II pyridoxal-phosphate-dependent aminotransferase family. Histidinol-phosphate aminotransferase subfamily. Homodimer. Requires pyridoxal 5'-phosphate as cofactor.

The catalysed reaction is L-histidinol phosphate + 2-oxoglutarate = 3-(imidazol-4-yl)-2-oxopropyl phosphate + L-glutamate. The protein operates within amino-acid biosynthesis; L-histidine biosynthesis; L-histidine from 5-phospho-alpha-D-ribose 1-diphosphate: step 7/9. The sequence is that of Histidinol-phosphate aminotransferase 2 from Burkholderia pseudomallei (strain 1710b).